A 274-amino-acid polypeptide reads, in one-letter code: Exosome complex component Rrp42 (274 aa).

This sequence belongs to the RNase PH family. Rrp42 subfamily. Component of the archaeal exosome complex. Forms a hexameric ring-like arrangement composed of 3 Rrp41-Rrp42 heterodimers. The hexameric ring associates with a trimer of Rrp4 and/or Csl4 subunits.

The protein resides in the cytoplasm. In terms of biological role, non-catalytic component of the exosome, which is a complex involved in RNA degradation. Contributes to the structuring of the Rrp41 active site. This Pyrococcus abyssi (strain GE5 / Orsay) protein is Exosome complex component Rrp42.